A 570-amino-acid polypeptide reads, in one-letter code: Serine/threonine-protein kinase flr-4 (570 aa).

One can recognise a Protein kinase domain in the interval 40–331 (YKYIQDLGKG…KLRIQIKKIL (292 aa)). Residues 46-54 (LGKGRFGTV) and lysine 67 each bind ATP. Aspartate 172 serves as the catalytic Proton acceptor. The disordered stretch occupies residues 338–369 (EEETDISHPISNSNTDSSTAISHNHSNDRKVG). Residues 346–361 (PISNSNTDSSTAISHN) are compositionally biased toward polar residues. The next 3 membrane-spanning stretches (helical) occupy residues 400 to 420 (IMQI…FLNI), 425 to 445 (ICYL…FLLI), and 471 to 491 (LIIS…CCMV). The disordered stretch occupies residues 550-570 (VRRNHDDYYYDESSGPANEEN).

The protein belongs to the protein kinase superfamily. Ser/Thr protein kinase family. As to expression, present in the intestinal cells from comma-stage embryos through the adult stage, although the intestinal expression is weaker after the L1 stage. Accumulates at the cell membrane of intestinal cells, especially the lateral membrane intervening the intestinal cells. Also detected in the muscles of the pharyngeal isthmus from the 3-fold embryonic stage, and in a pair of head neurons, which correspond to the AUA neurons, from the late L1 stage (at protein level).

It is found in the membrane. It catalyses the reaction L-seryl-[protein] + ATP = O-phospho-L-seryl-[protein] + ADP + H(+). It carries out the reaction L-threonyl-[protein] + ATP = O-phospho-L-threonyl-[protein] + ADP + H(+). Its function is as follows. Probable serine-threonine protein kinase involved in the control of defecation rhythms. Required to increase the length of defecation cycle period. Acts in a cell-functional rather than developmental aspect in the regulation of defecation rhythms. Prevents preferential activation of the p38 MAPK pathway in response to the levels of vitamin B12 in different food types during larval development, thereby regulating the expression of cytoprotective genes, modulating life span and stress tolerance. The protein is Serine/threonine-protein kinase flr-4 (flr-4) of Caenorhabditis elegans.